We begin with the raw amino-acid sequence, 75 residues long: Large ribosomal subunit protein bL28 (75 aa).

Residues 1–21 (MARVCQVTGKRPMSGNKRSHA) are disordered.

The protein belongs to the bacterial ribosomal protein bL28 family.

The polypeptide is Large ribosomal subunit protein bL28 (Blochmanniella pennsylvanica (strain BPEN)).